Here is a 215-residue protein sequence, read N- to C-terminus: Pyridoxine/pyridoxamine 5'-phosphate oxidase (215 aa).

Substrate is bound by residues arginine 9–tyrosine 12 and lysine 67. Residues arginine 62–lysine 67, tyrosine 77–threonine 78, lysine 84, and glutamine 106 contribute to the FMN site. Substrate is bound by residues tyrosine 124, arginine 128, and serine 132. FMN-binding positions include glutamine 141–serine 142 and tryptophan 187. A substrate-binding site is contributed by arginine 193 to histidine 195. Position 197 (arginine 197) interacts with FMN.

This sequence belongs to the pyridoxamine 5'-phosphate oxidase family. In terms of assembly, homodimer. FMN serves as cofactor.

The catalysed reaction is pyridoxamine 5'-phosphate + O2 + H2O = pyridoxal 5'-phosphate + H2O2 + NH4(+). It carries out the reaction pyridoxine 5'-phosphate + O2 = pyridoxal 5'-phosphate + H2O2. Its pathway is cofactor metabolism; pyridoxal 5'-phosphate salvage; pyridoxal 5'-phosphate from pyridoxamine 5'-phosphate: step 1/1. It participates in cofactor metabolism; pyridoxal 5'-phosphate salvage; pyridoxal 5'-phosphate from pyridoxine 5'-phosphate: step 1/1. Functionally, catalyzes the oxidation of either pyridoxine 5'-phosphate (PNP) or pyridoxamine 5'-phosphate (PMP) into pyridoxal 5'-phosphate (PLP). The protein is Pyridoxine/pyridoxamine 5'-phosphate oxidase of Cytophaga hutchinsonii (strain ATCC 33406 / DSM 1761 / CIP 103989 / NBRC 15051 / NCIMB 9469 / D465).